Here is a 414-residue protein sequence, read N- to C-terminus: Putative competence-damage inducible protein (414 aa).

The protein belongs to the CinA family.

This Geobacillus kaustophilus (strain HTA426) protein is Putative competence-damage inducible protein.